The sequence spans 190 residues: Xanthine phosphoribosyltransferase (190 aa).

The xanthine site is built by Leu-20 and Asn-27. 128–132 (ANGKA) serves as a coordination point for 5-phospho-alpha-D-ribose 1-diphosphate. Lys-156 lines the xanthine pocket.

This sequence belongs to the purine/pyrimidine phosphoribosyltransferase family. Xpt subfamily. Homodimer.

Its subcellular location is the cytoplasm. It carries out the reaction XMP + diphosphate = xanthine + 5-phospho-alpha-D-ribose 1-diphosphate. It functions in the pathway purine metabolism; XMP biosynthesis via salvage pathway; XMP from xanthine: step 1/1. Its function is as follows. Converts the preformed base xanthine, a product of nucleic acid breakdown, to xanthosine 5'-monophosphate (XMP), so it can be reused for RNA or DNA synthesis. In Pseudomonas fluorescens (strain Pf0-1), this protein is Xanthine phosphoribosyltransferase.